We begin with the raw amino-acid sequence, 478 residues long: Septin-4 (478 aa).

A disordered region spans residues 1 to 115; that stretch reads MDHSLGWQGN…RSPWGKLDPY (115 aa). Phosphoserine is present on residues S28, S29, and S68. The span at 84 to 93 shows a compositional bias: polar residues; sequence PQPSDSQQYF. Positions 94-108 are enriched in low complexity; the sequence is SAPAPLSPSSRPRSP. Residues S117 and S118 each carry the phosphoserine modification. One can recognise a Septin-type G domain in the interval 141-414; that stretch reads KGFDFTLMVA…ENYRAQCIQS (274 aa). The interval 151-158 is G1 motif; the sequence is GESGLGKS. Residues 151–158 and T185 each bind GTP; that span reads GESGLGKS. Positions 208-211 are G3 motif; the sequence is DTPG. Residues 289–292 form a G4 motif region; it reads AKAD. 290–298 is a GTP binding site; sequence KADTLTPPE. Phosphoserine is present on S325. Residues G348 and R363 each contribute to the GTP site. The disordered stretch occupies residues 428–449; the sequence is LTRESGTDFPIPAVPPGTDPET. A Phosphoserine modification is found at S432. T434 carries the phosphothreonine modification. Residues 447-478 adopt a coiled-coil conformation; that stretch reads PETEKLIREKDEELRRMQEMLHKIQRQMKETH.

Belongs to the TRAFAC class TrmE-Era-EngA-EngB-Septin-like GTPase superfamily. Septin GTPase family. As to quaternary structure, septins polymerize into heterooligomeric protein complexes that form filaments, and can associate with cellular membranes, actin filaments and microtubules. GTPase activity is required for filament formation. Interacts with SEPTIN8. Component of a septin core octameric complex consisting of SEPTIN12, SEPTIN7, SEPTIN6 and SEPTIN2 or SEPTIN4 in the order 12-7-6-2-2-6-7-12 or 12-7-6-4-4-6-7-12. Interacts with SEPTIN14 (via C-terminus). Interacts with DYRK1A. Interacts with SLC6A3/DAT and SNCA/alpha-synuclein. Interacts with STX1A; in the striatum. Interacts with XIAP (via BIR3 domain) following the induction of apoptosis. Interacts with AREL1 (via HECT domain); in the cytoplasm following induction of apoptosis. Interacts with DPYSL5. In terms of processing, phosphorylated by DYRK1A. Ubiquitinated by AREL1. Post-translationally, may be phosphorylated. In terms of tissue distribution, expressed in the cerebral cortex, striatum, midbrain, cerebellum and spinal cord (at protein level). Expressed in the substantia nigra pars compacta, ventral tegmental area, projection fiber bundles and in axon terminals surrounding striatal neurons (at protein level). Expressed in hair follicle stem cells (at protein level). Expressed in small intestinal crypts; abundantly expressed at the crypt base (at protein level). Widely expressed in the brain and to a lesser extent in the testis, lung and liver. As to expression, highly expressed in the brain and testis and, to a lesser extent in the heart, lung and kidney. In the brain, abundant in areas of high cell density, particularly in the stria terminalis. Expressed in the entorhinal, temporal and visual cortices and the hippocampus of the brain where is colocalizes with DYRK1A in postnatal day 1 and adult mice. Expressed and extensively colocalizes with DYRK1A in apical dendrites of pyramidal cells. Predominantly expressed in embryonic brain and dorsal root ganglion neurons. In terms of tissue distribution, expressed in LGR5-positive intestinal stem cells and lysozyme-positive Paneth cells (at protein level). Expressed in the brain and testis.

It localises to the cytoplasm. It is found in the cell projection. The protein resides in the cilium. The protein localises to the flagellum. Its subcellular location is the cytoplasmic vesicle. It localises to the secretory vesicle. It is found in the axon. The protein resides in the dendrite. The protein localises to the perikaryon. Its subcellular location is the synapse. It localises to the mitochondrion. It is found in the cytosol. In terms of biological role, filament-forming cytoskeletal GTPase. Pro-apoptotic protein involved in LGR5-positive intestinal stem cell and Paneth cell expansion in the intestines, via its interaction with XIAP. May also play a role in the regulation of cell fate in the intestine. Positive regulator of apoptosis involved in hematopoietic stem cell homeostasis; via its interaction with XIAP. Negative regulator of repair and hair follicle regeneration in response to injury, due to inhibition of hair follicle stem cell proliferation, potentially via its interaction with XIAP. Plays an important role in male fertility and sperm motility. During spermiogenesis, essential for the establishment of the annulus (a fibrous ring structure connecting the midpiece and the principal piece of the sperm flagellum) which is a requisite for the structural and mechanical integrity of the sperm. Involved in the migration of cortical neurons and the formation of neuron leading processes during embryonic development. Required for dopaminergic metabolism in presynaptic autoreceptors; potentially via activity as a presynaptic scaffold protein. The chain is Septin-4 from Mus musculus (Mouse).